A 215-amino-acid polypeptide reads, in one-letter code: uncharacterized protein (215 aa).

This is an uncharacterized protein from Methanocaldococcus jannaschii (strain ATCC 43067 / DSM 2661 / JAL-1 / JCM 10045 / NBRC 100440) (Methanococcus jannaschii).